The following is a 248-amino-acid chain: Small ribosomal subunit protein uS3 (248 aa).

Positions 39 to 108 (IRKLVDKKLS…TVAVNVAEIP (70 aa)) constitute a KH type-2 domain. Residues 214–248 (ETIARPQRRNDERRPEGGDRANRRRPTARRRAGGE) form a disordered region. A compositionally biased stretch (basic and acidic residues) spans 221–234 (RRNDERRPEGGDRA). Residues 235 to 248 (NRRRPTARRRAGGE) show a composition bias toward basic residues.

It belongs to the universal ribosomal protein uS3 family. In terms of assembly, part of the 30S ribosomal subunit. Forms a tight complex with proteins S10 and S14.

Functionally, binds the lower part of the 30S subunit head. Binds mRNA in the 70S ribosome, positioning it for translation. This is Small ribosomal subunit protein uS3 from Deinococcus deserti (strain DSM 17065 / CIP 109153 / LMG 22923 / VCD115).